The sequence spans 331 residues: Glycine betaine/proline betaine-binding periplasmic protein (331 aa).

The signal sequence occupies residues 1-21 (MRHTVIFASAFATLVTASAFA). Substrate is bound by residues Trp86, His90, and 161–163 (WGC). An intrachain disulfide couples Cys157 to Cys163.

As to quaternary structure, the complex is composed of two ATP-binding proteins (ProV), two transmembrane proteins (ProW) and a solute-binding protein (ProX).

The protein resides in the periplasm. Functionally, part of the ProU ABC transporter complex involved in glycine betaine and proline betaine uptake. Binds glycine betaine and proline betaine with high affinity. The chain is Glycine betaine/proline betaine-binding periplasmic protein (proX) from Salmonella typhimurium (strain LT2 / SGSC1412 / ATCC 700720).